Here is a 190-residue protein sequence, read N- to C-terminus: Lipid A acyltransferase PagP (190 aa).

An N-terminal signal peptide occupies residues methionine 1 to alanine 24. Residues histidine 62, aspartate 105, and serine 106 contribute to the active site.

This sequence belongs to the lipid A palmitoyltransferase family. As to quaternary structure, homodimer.

It localises to the cell outer membrane. The catalysed reaction is a lipid A + a 1,2-diacyl-sn-glycero-3-phosphocholine = a hepta-acyl lipid A + a 2-acyl-sn-glycero-3-phosphocholine. It catalyses the reaction a lipid IVA + a 1,2-diacyl-sn-glycero-3-phosphocholine = a lipid IVB + a 2-acyl-sn-glycero-3-phosphocholine. It carries out the reaction a lipid IIA + a 1,2-diacyl-sn-glycero-3-phosphocholine = a lipid IIB + a 2-acyl-sn-glycero-3-phosphocholine. Its function is as follows. Transfers a fatty acid residue from the sn-1 position of a phospholipid to the N-linked hydroxyfatty acid chain on the proximal unit of lipid A or its precursors. This chain is Lipid A acyltransferase PagP, found in Pantoea ananatis (strain LMG 20103).